Reading from the N-terminus, the 454-residue chain is Toxin CfTX-A (454 aa).

A signal peptide spans 1 to 18 (MDYAFIVFLVCFVSGTLG). Positions 19–25 (NRRRAKR) are excised as a propeptide. Positions 27–61 (VDEVTSGINQLVNQLNNVQQDTAAIKSALEELKTE) form a coiled coil.

The protein belongs to the jellyfish toxin family. Type II subfamily. As to quaternary structure, oligomer. Post-translationally, contains 2 disulfide bonds. In terms of tissue distribution, nematocytes.

Its subcellular location is the secreted. It localises to the nematocyst. The protein localises to the target cell membrane. Its function is as follows. The fraction containing this toxin and CfTX-A shows potent hemolytic activity. This fraction causes minor effects on the cardiovascular system of anesthetized rats (at 25 ug/kg), since it has no significant effects on heart rate but produces relatively small increases in mean arterial pressure. The polypeptide is Toxin CfTX-A (Chironex fleckeri (Australian box jellyfish)).